The sequence spans 700 residues: Myb-related protein B (700 aa).

HTH myb-type domains follow at residues 26-77, 78-133, and 134-184; these read RDSK…LRVL, NPDL…NPEV, and KKSC…KRKV. The H-T-H motif DNA-binding region spans 54–77; it reads WKFLASHFPNRTDQQCQYRWLRVL. A Glycyl lysine isopeptide (Lys-Gly) (interchain with G-Cter in SUMO2) cross-link involves residue Lys-104. 2 consecutive DNA-binding regions (H-T-H motif) follow at residues 106–129 and 157–180; these read WTLI…HNHL and WAEI…NSTI. Glycyl lysine isopeptide (Lys-Gly) (interchain with G-Cter in SUMO2) cross-links involve residues Lys-194 and Lys-197. Disordered stretches follow at residues 212 to 287 and 391 to 412; these read LQSA…PETS and PISP…VLKR. Positions 213-229 are enriched in polar residues; sequence QSAQPTEGQGSLLTNWP. Phosphoserine is present on Ser-241. At Thr-266 the chain carries Phosphothreonine. Lys-275 is covalently cross-linked (Glycyl lysine isopeptide (Lys-Gly) (interchain with G-Cter in SUMO2)). Phosphoserine is present on residues Ser-282 and Ser-393. Lys-411 is covalently cross-linked (Glycyl lysine isopeptide (Lys-Gly) (interchain with G-Cter in SUMO2)). Residues 411–417 carry the Nuclear localization signal motif; that stretch reads KRQRKRR. A phosphothreonine; by CDK2 mark is found at Thr-440 and Thr-444. Residues Lys-447 and Lys-482 each participate in a glycyl lysine isopeptide (Lys-Gly) (interchain with G-Cter in SUMO2) cross-link. Residues Thr-487 and Thr-494 each carry the phosphothreonine; by CDK2 modification. Lys-499 is covalently cross-linked (Glycyl lysine isopeptide (Lys-Gly) (interchain with G-Cter in SUMO2)). Position 505 is a phosphothreonine (Thr-505). Lys-509 participates in a covalent cross-link: Glycyl lysine isopeptide (Lys-Gly) (interchain with G-Cter in SUMO2). The residue at position 520 (Thr-520) is a Phosphothreonine; by CDK2. Residues Lys-523, Lys-533, and Lys-546 each participate in a glycyl lysine isopeptide (Lys-Gly) (interchain with G-Cter in SUMO2) cross-link. The Bipartite nuclear localization signal signature appears at 564 to 584; that stretch reads RPEKQKRKPGLRRSPIKKVRK. Ser-577 carries the post-translational modification Phosphoserine; by CDK2. Glycyl lysine isopeptide (Lys-Gly) (interchain with G-Cter in SUMO2) cross-links involve residues Lys-584, Lys-596, Lys-625, Lys-639, and Lys-648.

Component of the DREAM complex (also named LINC complex) at least composed of E2F4, E2F5, LIN9, LIN37, LIN52, LIN54, MYBL1, MYBL2, RBL1, RBL2, RBBP4, TFDP1 and TFDP2. The complex exists in quiescent cells where it represses cell cycle-dependent genes. It dissociates in S phase when LIN9, LIN37, LIN52 and LIN54 form a subcomplex that binds to MYBL22. Interacts with CCNF (via the Cyclin N-terminal domain). Phosphorylated by cyclin A/CDK2 during S-phase. Phosphorylation at Thr-520 is probably involved in transcriptional activity.

The protein localises to the nucleus. Functionally, transcription factor involved in the regulation of cell survival, proliferation, and differentiation. Transactivates the expression of the CLU gene. In Homo sapiens (Human), this protein is Myb-related protein B (MYBL2).